Here is a 69-residue protein sequence, read N- to C-terminus: Conotoxin Fr3.1 (69 aa).

The signal sequence occupies residues methionine 1–leucine 20. A propeptide spanning residues glutamine 21–arginine 51 is cleaved from the precursor. A Pyrrolidone carboxylic acid modification is found at glutamine 52. Position 54 is a 4-carboxyglutamate (glutamate 54). A 4-hydroxyproline modification is found at proline 58.

Belongs to the conotoxin M superfamily. As to expression, expressed by the venom duct.

The protein resides in the secreted. Probable toxin. The polypeptide is Conotoxin Fr3.1 (Conus frigidus (Frigid cone)).